We begin with the raw amino-acid sequence, 686 residues long: Pentatricopeptide repeat-containing protein At4g08210 (686 aa).

PPR repeat units lie at residues 4-38, 39-69, 70-104, 106-140, 141-171, 172-206, 207-236, 237-271, 272-302, 306-340, 341-375, 376-406, 407-441, 442-476, 477-507, 508-542, 543-573, and 579-609; these read DLKL…GISQ, NVFI…MSER, NIVT…EEEA, NEFM…NLRG, DVVL…ILRP, SSTS…NVVS, WNCL…GLVL, DGFA…GLES, SPFA…EKLA, SVAV…DLCF, DSYT…GYEL, DYIV…LPNK, DIIA…GLDA, DQFI…GYES, EPVT…MLER, DVVS…GIEP, NKVT…MKSE, and YLEH…MPLE. The type E motif; degenerate stretch occupies residues 614 to 686; that stretch reads IWTSLLTACG…AKESGMSWII (73 aa).

Belongs to the PPR family. PCMP-E subfamily.

The sequence is that of Pentatricopeptide repeat-containing protein At4g08210 (PCMP-E100) from Arabidopsis thaliana (Mouse-ear cress).